We begin with the raw amino-acid sequence, 232 residues long: Orotidine 5'-phosphate decarboxylase (232 aa).

Substrate contacts are provided by residues aspartate 11, lysine 33, 61 to 70 (DMKLFDIGAT), threonine 116, arginine 179, glutamine 188, glycine 208, and arginine 209. The Proton donor role is filled by lysine 63.

This sequence belongs to the OMP decarboxylase family. Type 1 subfamily. Homodimer.

The enzyme catalyses orotidine 5'-phosphate + H(+) = UMP + CO2. The protein operates within pyrimidine metabolism; UMP biosynthesis via de novo pathway; UMP from orotate: step 2/2. Its function is as follows. Catalyzes the decarboxylation of orotidine 5'-monophosphate (OMP) to uridine 5'-monophosphate (UMP). In Cereibacter sphaeroides (strain ATCC 17023 / DSM 158 / JCM 6121 / CCUG 31486 / LMG 2827 / NBRC 12203 / NCIMB 8253 / ATH 2.4.1.) (Rhodobacter sphaeroides), this protein is Orotidine 5'-phosphate decarboxylase.